Here is a 396-residue protein sequence, read N- to C-terminus: Subtilisin-like protease 5 (396 aa).

The signal sequence occupies residues Met1 to Ala20. Residues Ala21–His116 constitute a propeptide that is removed on maturation. An Inhibitor I9 domain is found at Tyr37–Ile113. A glycan (N-linked (GlcNAc...) asparagine) is linked at Asn63. The Peptidase S8 domain occupies Pro125–Arg396. Active-site charge relay system residues include Asp156 and His187. N-linked (GlcNAc...) asparagine glycosylation is found at Asn230 and Asn248. The Charge relay system role is filled by Ser342. Over residues Thr377 to Leu389 the composition is skewed to polar residues. Residues Thr377–Arg396 form a disordered region. N-linked (GlcNAc...) asparagine glycosylation is present at Asn392.

This sequence belongs to the peptidase S8 family.

Its subcellular location is the secreted. Secreted subtilisin-like serine protease with keratinolytic activity that contributes to pathogenicity. The polypeptide is Subtilisin-like protease 5 (SUB5) (Arthroderma benhamiae (Trichophyton mentagrophytes)).